The following is a 349-amino-acid chain: UDP-N-acetylenolpyruvoylglucosamine reductase (349 aa).

The FAD-binding PCMH-type domain maps to 25–213 (VGPVARRLVT…VEQGERTDPQ (189 aa)). R165 is a catalytic residue. Residue S242 is the Proton donor of the active site. Residue E341 is part of the active site.

The protein belongs to the MurB family. Requires FAD as cofactor.

The protein resides in the cytoplasm. The catalysed reaction is UDP-N-acetyl-alpha-D-muramate + NADP(+) = UDP-N-acetyl-3-O-(1-carboxyvinyl)-alpha-D-glucosamine + NADPH + H(+). Its pathway is cell wall biogenesis; peptidoglycan biosynthesis. Functionally, cell wall formation. This Mycolicibacterium gilvum (strain PYR-GCK) (Mycobacterium gilvum (strain PYR-GCK)) protein is UDP-N-acetylenolpyruvoylglucosamine reductase.